Here is a 124-residue protein sequence, read N- to C-terminus: Fluoride-specific ion channel FluC 1 (124 aa).

4 helical membrane passes run 1–21 (MNWL…YVTD), 30–50 (AVFP…LGLL), 56–76 (AGVA…GALT), and 102–122 (IASV…AQAL). Na(+)-binding residues include Gly-73 and Thr-76.

The protein belongs to the fluoride channel Fluc/FEX (TC 1.A.43) family.

The protein resides in the cell membrane. The enzyme catalyses fluoride(in) = fluoride(out). Na(+) is not transported, but it plays an essential structural role and its presence is essential for fluoride channel function. In terms of biological role, fluoride-specific ion channel. Important for reducing fluoride concentration in the cell, thus reducing its toxicity. The sequence is that of Fluoride-specific ion channel FluC 1 from Streptomyces avermitilis (strain ATCC 31267 / DSM 46492 / JCM 5070 / NBRC 14893 / NCIMB 12804 / NRRL 8165 / MA-4680).